The chain runs to 439 residues: Methylenetetrahydrofolate--tRNA-(uracil-5-)-methyltransferase TrmFO (439 aa).

Residue 9–14 participates in FAD binding; sequence GAGLAG.

It belongs to the MnmG family. TrmFO subfamily. FAD serves as cofactor.

The protein resides in the cytoplasm. The enzyme catalyses uridine(54) in tRNA + (6R)-5,10-methylene-5,6,7,8-tetrahydrofolate + NADH + H(+) = 5-methyluridine(54) in tRNA + (6S)-5,6,7,8-tetrahydrofolate + NAD(+). It catalyses the reaction uridine(54) in tRNA + (6R)-5,10-methylene-5,6,7,8-tetrahydrofolate + NADPH + H(+) = 5-methyluridine(54) in tRNA + (6S)-5,6,7,8-tetrahydrofolate + NADP(+). Functionally, catalyzes the folate-dependent formation of 5-methyl-uridine at position 54 (M-5-U54) in all tRNAs. In Lactobacillus delbrueckii subsp. bulgaricus (strain ATCC BAA-365 / Lb-18), this protein is Methylenetetrahydrofolate--tRNA-(uracil-5-)-methyltransferase TrmFO.